Here is a 208-residue protein sequence, read N- to C-terminus: Uracil phosphoribosyltransferase (208 aa).

Residues R78, R103, and 130–138 (DPMLATGGS) contribute to the 5-phospho-alpha-D-ribose 1-diphosphate site. Uracil contacts are provided by residues I193 and 198-200 (GDA). A 5-phospho-alpha-D-ribose 1-diphosphate-binding site is contributed by D199.

Belongs to the UPRTase family. The cofactor is Mg(2+).

The enzyme catalyses UMP + diphosphate = 5-phospho-alpha-D-ribose 1-diphosphate + uracil. The protein operates within pyrimidine metabolism; UMP biosynthesis via salvage pathway; UMP from uracil: step 1/1. Allosterically activated by GTP. Catalyzes the conversion of uracil and 5-phospho-alpha-D-ribose 1-diphosphate (PRPP) to UMP and diphosphate. The polypeptide is Uracil phosphoribosyltransferase (Photorhabdus laumondii subsp. laumondii (strain DSM 15139 / CIP 105565 / TT01) (Photorhabdus luminescens subsp. laumondii)).